The sequence spans 91 residues: Large ribosomal subunit protein eL37 (91 aa).

4 residues coordinate Zn(2+): Cys-19, Cys-22, Cys-34, and Cys-37. The C4-type zinc finger occupies 19 to 37 (CKRCGKSSFHIQKKRCASC).

This sequence belongs to the eukaryotic ribosomal protein eL37 family. Zn(2+) is required as a cofactor.

Functionally, binds to the 23S rRNA. This Caenorhabditis elegans protein is Large ribosomal subunit protein eL37.